Here is a 288-residue protein sequence, read N- to C-terminus: MLTLRDRIRQELHVRPEIDPGAEVERRVAFLAKYLQHTPARGFVLGISGGQDSTLAGRLSQLAAERVRAEGGDATFFAVRLPYGVQADEADAQTALGFIRPDRTLTVNIKAAVDASARAVAEALGTGLHNAPQPETTPHDPLRDFVRGNIKARERMVAQYAIAGQENLLVVGTDHAAEALTGFFTKYGDGGVDLTPLTGLTKRQGAQLLAFLGAPESTWRKVPTADLEDDRPGLPDEVALGVTYAQIDAYLEGRAVSPEVAARLERLYLATRHKRALPVTPFDHWWQA.

Residue 46-53 (GISGGQDS) participates in ATP binding. Aspartate 52 contacts Mg(2+). Residue arginine 153 participates in deamido-NAD(+) binding. Threonine 173 is a binding site for ATP. Glutamate 178 lines the Mg(2+) pocket. The deamido-NAD(+) site is built by lysine 186 and aspartate 193. ATP-binding residues include lysine 202 and threonine 224. 273-274 (HK) provides a ligand contact to deamido-NAD(+).

It belongs to the NAD synthetase family. Homodimer.

It catalyses the reaction deamido-NAD(+) + NH4(+) + ATP = AMP + diphosphate + NAD(+) + H(+). It functions in the pathway cofactor biosynthesis; NAD(+) biosynthesis; NAD(+) from deamido-NAD(+) (ammonia route): step 1/1. Functionally, catalyzes the ATP-dependent amidation of deamido-NAD to form NAD. Uses ammonia as a nitrogen source. In Deinococcus geothermalis (strain DSM 11300 / CIP 105573 / AG-3a), this protein is NH(3)-dependent NAD(+) synthetase.